Here is a 161-residue protein sequence, read N- to C-terminus: Protein-lysine N-methyltransferase (161 aa).

The DxGxGxG SAM-binding motif motif lies at 34–40 (DLGCGDG).

Belongs to the class I-like SAM-binding methyltransferase superfamily. In terms of assembly, monomer.

It carries out the reaction L-lysyl-[protein] + S-adenosyl-L-methionine = N(6)-methyl-L-lysyl-[protein] + S-adenosyl-L-homocysteine + H(+). Catalyzes the methylation of lysine residues in target proteins, using S-adenosyl-L-methionine (SAM) as the methyl donor. Exhibits broad substrate specificity, being able to methylate the crenarchaeal chromatin protein Cren7 primarily at 'Lys-11', 'Lys-16' and 'Lys-31', as well as a number of recombinant Sulfolobus proteins in vitro. Methylates lysine residues in a rather sequence-independent manner. This Saccharolobus islandicus (strain REY15A) (Sulfolobus islandicus) protein is Protein-lysine N-methyltransferase.